The chain runs to 151 residues: Succinate dehydrogenase subunit 4, mitochondrial (151 aa).

The transit peptide at 1 to 78 (MSLRRTILDL…RSISSSIGQS (78 aa)) directs the protein to the mitochondrion. H109 provides a ligand contact to heme. Y121 is a binding site for a ubiquinone. A helical transmembrane segment spans residues 130–150 (LIVMSLGLFQIIVLKDIILFL).

Component of complex II composed of eight subunits in plants: four classical SDH subunits SDH1, SDH2, SDH3 and SDH4 (a flavoprotein (FP), an iron-sulfur protein (IP), and a cytochrome b composed of a large and a small subunit.), as well as four subunits unknown in mitochondria from bacteria and heterotrophic eukaryotes. Requires heme as cofactor. As to expression, expressed in flowers, inflorescences and stems.

The protein resides in the mitochondrion inner membrane. It functions in the pathway carbohydrate metabolism; tricarboxylic acid cycle. Functionally, membrane-anchoring subunit of succinate dehydrogenase (SDH). The polypeptide is Succinate dehydrogenase subunit 4, mitochondrial (Arabidopsis thaliana (Mouse-ear cress)).